Reading from the N-terminus, the 335-residue chain is Putative zinc metalloprotease CPE1693 (335 aa).

Histidine 17 is a binding site for Zn(2+). Glutamate 18 is an active-site residue. Histidine 21 is a binding site for Zn(2+). Transmembrane regions (helical) follow at residues 88–110, 262–284, and 312–334; these read ILVM…IGLA, LLWF…FPAL, and TVGF…IFPI. The PDZ domain occupies 96 to 174; the sequence is FMNYVLALII…PVELEIKRGN (79 aa).

This sequence belongs to the peptidase M50B family. It depends on Zn(2+) as a cofactor.

It localises to the cell membrane. The polypeptide is Putative zinc metalloprotease CPE1693 (Clostridium perfringens (strain 13 / Type A)).